We begin with the raw amino-acid sequence, 218 residues long: CTD kinase subunit gamma (218 aa).

In terms of domain architecture, CID spans 2–138; the sequence is DPFEGRMTFL…DAMATVEAHE (137 aa). The tract at residues 137–157 is disordered; the sequence is HEQASKSGDTSTSGAISKNDI. Over residues 141–152 the composition is skewed to polar residues; sequence SKSGDTSTSGAI.

Belongs to the CTK3 family. As to quaternary structure, CTDK-I consists of three subunits, ctk1/lsk1, ctk2/lsc1 and ctk3 (also called alpha, beta and gamma).

The protein localises to the cytoplasm. It localises to the nucleus. Its function is as follows. Subunit of the CTDK-I complex, which hyperphosphorylates the C-terminal heptapeptide repeat domain (CTD) of the largest RNA polymerase II subunit. As part of the CTDK-I complex, involved in RNA polymerase II transcriptional elongation and pre-mRNA 3'-end processing. Together with ctk2, required for ctk1/lsk1 CTD kinase activation. This chain is CTD kinase subunit gamma, found in Schizosaccharomyces pombe (strain 972 / ATCC 24843) (Fission yeast).